Reading from the N-terminus, the 200-residue chain is Signal peptidase complex catalytic subunit SEC11 (200 aa).

The Cytoplasmic segment spans residues 1-15 (MFAELAPYLSNPRQT). A helical; Signal-anchor for type II membrane protein transmembrane segment spans residues 16–33 (LAQILNFALVLSTAFMGW). Over 34–200 (KALSVYTNSS…MGVMVMLQRE (167 aa)) the chain is Lumenal. The N-linked (GlcNAc...) asparagine glycan is linked to Asn-41. Catalysis depends on charge relay system residues Ser-53 and His-92. The disordered stretch occupies residues 101–131 (GDGGKKSQRRLEKEADKRSGPGLSSPISHQM). Positions 103–119 (GGKKSQRRLEKEADKRS) are enriched in basic and acidic residues. Catalysis depends on Asp-142, which acts as the Charge relay system. The C-terminal short (CTS) helix stretch occupies residues 186–197 (VLLGIMGVMVML).

This sequence belongs to the peptidase S26B family. As to quaternary structure, component of the signal peptidase complex (SPC) composed of a catalytic subunit SEC11 and three accessory subunits SPC1, SPC2 and SPC3. The complex induces a local thinning of the ER membrane which is used to measure the length of the signal peptide (SP) h-region of protein substrates. This ensures the selectivity of the complex towards h-regions shorter than 18-20 amino acids. SPC associates with the translocon complex.

It localises to the endoplasmic reticulum membrane. It carries out the reaction Cleavage of hydrophobic, N-terminal signal or leader sequences from secreted and periplasmic proteins.. Catalytic component of the signal peptidase complex (SPC) which catalyzes the cleavage of N-terminal signal sequences from nascent proteins as they are translocated into the lumen of the endoplasmic reticulum. Specifically cleaves N-terminal signal peptides that contain a hydrophobic alpha-helix (h-region) shorter than 18-20 amino acids. The protein is Signal peptidase complex catalytic subunit SEC11 (SEC11) of Arthroderma gypseum (strain ATCC MYA-4604 / CBS 118893) (Microsporum gypseum).